The following is a 296-amino-acid chain: 33 kDa chaperonin (296 aa).

2 disulfide bridges follow: cysteine 233-cysteine 235 and cysteine 267-cysteine 270.

The protein belongs to the HSP33 family. Post-translationally, under oxidizing conditions two disulfide bonds are formed involving the reactive cysteines. Under reducing conditions zinc is bound to the reactive cysteines and the protein is inactive.

Its subcellular location is the cytoplasm. In terms of biological role, redox regulated molecular chaperone. Protects both thermally unfolding and oxidatively damaged proteins from irreversible aggregation. Plays an important role in the bacterial defense system toward oxidative stress. In Actinobacillus pleuropneumoniae serotype 7 (strain AP76), this protein is 33 kDa chaperonin.